A 645-amino-acid polypeptide reads, in one-letter code: Cyclin-D-binding Myb-like transcription factor 1 (645 aa).

2 disordered regions span residues 34-71 (QNDG…STEY) and 95-119 (RDEE…KKGE). 2 stretches are compositionally biased toward acidic residues: residues 36 to 46 (DGEDLGSDETT) and 95 to 105 (RDEELESDDLS). Residues 219-257 (GKYTDEEINKLKELRQKHGNDWATIGSALGRSASSVKDR) form the Myb-like 1 domain. Residues 262-327 (KDTCNTGKWT…KWLNYLNWKQ (66 aa)) enclose the HTH myb-type domain. The segment at residues 300–323 (WASVAELVGTRSEKQCRSKWLNYL) is a DNA-binding region (H-T-H motif). Positions 333 to 382 (WTKEDDINLVRRIAELEVEDENEINWDILASGWSSVRSPQWLRSKWWTIK) constitute a Myb-like 2 domain. The segment at 568–645 (VKEEPSENQT…ILENQEEGSN (78 aa)) is disordered. Basic and acidic residues predominate over residues 587–597 (EQSKQGEKTLD). Polar residues predominate over residues 615-625 (IPTNEDISSDS).

The protein belongs to the DMTF1 family.

It localises to the nucleus. In terms of biological role, transcriptional activator which activates the CDKN2A/ARF locus in response to Ras-Raf signaling, thereby promoting p53/TP53-dependent growth arrest. Binds to the consensus sequence 5'-CCCG[GT]ATGT-3'. The chain is Cyclin-D-binding Myb-like transcription factor 1 (dmtf1) from Danio rerio (Zebrafish).